The following is a 359-amino-acid chain: UPF0283 membrane protein RHE_CH02332 (359 aa).

Positions 1-61 are disordered; it reads MSKPPSDLPR…EDPFINPDRD (61 aa). 2 helical membrane passes run 77–97 and 111–131; these read FGKI…GLWT and LGYA…ALVI.

The protein belongs to the UPF0283 family.

Its subcellular location is the cell inner membrane. The protein is UPF0283 membrane protein RHE_CH02332 of Rhizobium etli (strain ATCC 51251 / DSM 11541 / JCM 21823 / NBRC 15573 / CFN 42).